The following is a 65-amino-acid chain: Seminal plasma acrosin inhibitor A1 (65 aa).

Residues 1–59 form the Kazal-like domain; the sequence is TRKQPNCNVYRSHLFFCTRQMDPICGTNGKSYANPCIFCSEKGLRNQKFDFGHWGHCRE. 3 cysteine pairs are disulfide-bonded: Cys-7–Cys-39, Cys-17–Cys-36, and Cys-25–Cys-57. Residue Ser-12 is glycosylated (O-linked (GalNAc...) serine). Residue Ser-62 is glycosylated (O-linked (GalNAc...) serine).

The identity of the O-linked saccharides are not reported in Ref.1. The O-linked polysaccharides on Ser-12 and Ser-62 are probably the mucin type linked to GalNAc. In terms of tissue distribution, seminal plasma.

Its subcellular location is the secreted. Inhibits acrosin. This chain is Seminal plasma acrosin inhibitor A1, found in Sus scrofa (Pig).